We begin with the raw amino-acid sequence, 73 residues long: MMMMFSVVSVFLMLLLLKFHDLSMGEEISLLKKVVRREESMLLSCPDLSCPTGYTCDVLTKKCKRLSDELWDH.

The signal sequence occupies residues 1–25 (MMMMFSVVSVFLMLLLLKFHDLSMG). A propeptide spanning residues 26–37 (EEISLLKKVVRR) is cleaved from the precursor. 2 disulfide bridges follow: Cys45–Cys56 and Cys50–Cys63.

Belongs to the scoloptoxin-04 family. Expressed by the venom gland.

The protein localises to the secreted. Functionally, exhibits highly specific blockage of Kv2.1/KCNB1 (IC(50)=41.7 nM) voltage-gated potassium channels. This blockage is not associated with a significant change in steady-state activation, suggesting that this toxin acts as a channel blocker rather than a gating-modifier. Shows potential analgesic activities in formalin-induced paw licking, thermal pain, and acetic acid-induced abdominal writhing mice models. This Scolopendra mutilans (Chinese red-headed centipede) protein is Kappa-scoloptoxin SsmTx-I.